A 358-amino-acid polypeptide reads, in one-letter code: UDP-N-acetylglucosamine--N-acetylmuramyl-(pentapeptide) pyrophosphoryl-undecaprenol N-acetylglucosamine transferase (358 aa).

UDP-N-acetyl-alpha-D-glucosamine-binding positions include 11-13 (TGG), R163, S191, I245, and Q290.

Belongs to the glycosyltransferase 28 family. MurG subfamily.

Its subcellular location is the cell inner membrane. The enzyme catalyses di-trans,octa-cis-undecaprenyl diphospho-N-acetyl-alpha-D-muramoyl-L-alanyl-D-glutamyl-meso-2,6-diaminopimeloyl-D-alanyl-D-alanine + UDP-N-acetyl-alpha-D-glucosamine = di-trans,octa-cis-undecaprenyl diphospho-[N-acetyl-alpha-D-glucosaminyl-(1-&gt;4)]-N-acetyl-alpha-D-muramoyl-L-alanyl-D-glutamyl-meso-2,6-diaminopimeloyl-D-alanyl-D-alanine + UDP + H(+). It participates in cell wall biogenesis; peptidoglycan biosynthesis. Functionally, cell wall formation. Catalyzes the transfer of a GlcNAc subunit on undecaprenyl-pyrophosphoryl-MurNAc-pentapeptide (lipid intermediate I) to form undecaprenyl-pyrophosphoryl-MurNAc-(pentapeptide)GlcNAc (lipid intermediate II). This Janthinobacterium sp. (strain Marseille) (Minibacterium massiliensis) protein is UDP-N-acetylglucosamine--N-acetylmuramyl-(pentapeptide) pyrophosphoryl-undecaprenol N-acetylglucosamine transferase.